Reading from the N-terminus, the 210-residue chain is Signal peptidase complex catalytic subunit SEC11 (210 aa).

Over 1 to 21 the chain is Cytoplasmic; the sequence is MLAGLSPHLSNLRRSLTQVLN. The helical; Signal-anchor for type II membrane protein transmembrane segment at 22–38 threads the bilayer; that stretch reads FALVLSTAFMMWKGLSI. The Lumenal portion of the chain corresponds to 39–210; the sequence is YTNSSSPIVV…MGAMVILQRE (172 aa). N-linked (GlcNAc...) asparagine glycosylation is present at asparagine 41. Catalysis depends on charge relay system residues serine 53, histidine 92, and aspartate 152. Residues 196-207 are C-terminal short (CTS) helix; it reads VLLGIMGAMVIL.

The protein belongs to the peptidase S26B family. Component of the signal peptidase complex (SPC) composed of a catalytic subunit SEC11 and three accessory subunits SPC1, SPC2 and SPC3. The complex induces a local thinning of the ER membrane which is used to measure the length of the signal peptide (SP) h-region of protein substrates. This ensures the selectivity of the complex towards h-regions shorter than 18-20 amino acids. SPC associates with the translocon complex.

It localises to the endoplasmic reticulum membrane. It catalyses the reaction Cleavage of hydrophobic, N-terminal signal or leader sequences from secreted and periplasmic proteins.. Its function is as follows. Catalytic component of the signal peptidase complex (SPC) which catalyzes the cleavage of N-terminal signal sequences from nascent proteins as they are translocated into the lumen of the endoplasmic reticulum. Specifically cleaves N-terminal signal peptides that contain a hydrophobic alpha-helix (h-region) shorter than 18-20 amino acids. This is Signal peptidase complex catalytic subunit SEC11 (SEC11) from Coccidioides posadasii (strain RMSCC 757 / Silveira) (Valley fever fungus).